The sequence spans 235 residues: 2-C-methyl-D-erythritol 4-phosphate cytidylyltransferase (235 aa).

It belongs to the IspD/TarI cytidylyltransferase family. IspD subfamily.

It catalyses the reaction 2-C-methyl-D-erythritol 4-phosphate + CTP + H(+) = 4-CDP-2-C-methyl-D-erythritol + diphosphate. It functions in the pathway isoprenoid biosynthesis; isopentenyl diphosphate biosynthesis via DXP pathway; isopentenyl diphosphate from 1-deoxy-D-xylulose 5-phosphate: step 2/6. Its function is as follows. Catalyzes the formation of 4-diphosphocytidyl-2-C-methyl-D-erythritol from CTP and 2-C-methyl-D-erythritol 4-phosphate (MEP). This Mycolicibacterium paratuberculosis (strain ATCC BAA-968 / K-10) (Mycobacterium paratuberculosis) protein is 2-C-methyl-D-erythritol 4-phosphate cytidylyltransferase.